A 1435-amino-acid polypeptide reads, in one-letter code: Dicer-like protein 2 (1435 aa).

One can recognise a Helicase ATP-binding domain in the interval 54–234 (MLSESLRQNI…LEVLEINLNA (181 aa)). 67-74 (MDTGSGKT) serves as a coordination point for ATP. The short motif at 175 to 178 (DEAH) is the DEAH box element. The region spanning 400 to 564 (KLIDFLVLEH…ENKRALEHIQ (165 aa)) is the Helicase C-terminal domain. Residues 591–684 (ARNHLSHFCG…MPAHHHIDDE (94 aa)) form the Dicer dsRNA-binding fold domain. 2 consecutive RNase III domains span residues 956-1099 (ANEL…IDGG) and 1141-1323 (LSEI…IDSQ). The Mg(2+) site is built by Glu-1178, Asp-1309, and Glu-1312.

It belongs to the helicase family. Dicer subfamily. The cofactor is Mg(2+). Mn(2+) is required as a cofactor.

In terms of biological role, dicer-like endonuclease involved in cleaving double-stranded RNA in the RNA interference (RNAi) pathway. Produces 21 to 25 bp dsRNAs (siRNAs) which target the selective destruction of homologous RNAs leading to sequence-specific suppression of gene expression, called post-transcriptional gene silencing (PTGS). Part of a broad host defense response against viral infection and transposons. This chain is Dicer-like protein 2 (DCL2), found in Coccidioides immitis (strain RS) (Valley fever fungus).